The sequence spans 174 residues: F-box protein At1g70360 (174 aa).

Positions 136–174 constitute an F-box domain; sequence PPCFISLPRELKHKILESLPGVDIGTLACVSSELRDMAS.

This Arabidopsis thaliana (Mouse-ear cress) protein is F-box protein At1g70360.